We begin with the raw amino-acid sequence, 39 residues long: Glutenin, high molecular weight subunit PC237 (39 aa).

This sequence belongs to the gliadin/glutenin family. In terms of assembly, disulfide-bridge linked aggregates.

Glutenins are high-molecular weight seed storage proteins of wheat endosperm. Thought to be responsible for the visco-elastic property of wheat dough. The polypeptide is Glutenin, high molecular weight subunit PC237 (Triticum aestivum (Wheat)).